Consider the following 441-residue polypeptide: Methylenetetrahydrofolate--tRNA-(uracil-5-)-methyltransferase TrmFO (441 aa).

11–16 (GGGLAG) is an FAD binding site.

The protein belongs to the MnmG family. TrmFO subfamily. FAD is required as a cofactor.

The protein localises to the cytoplasm. It catalyses the reaction uridine(54) in tRNA + (6R)-5,10-methylene-5,6,7,8-tetrahydrofolate + NADH + H(+) = 5-methyluridine(54) in tRNA + (6S)-5,6,7,8-tetrahydrofolate + NAD(+). The catalysed reaction is uridine(54) in tRNA + (6R)-5,10-methylene-5,6,7,8-tetrahydrofolate + NADPH + H(+) = 5-methyluridine(54) in tRNA + (6S)-5,6,7,8-tetrahydrofolate + NADP(+). Functionally, catalyzes the folate-dependent formation of 5-methyl-uridine at position 54 (M-5-U54) in all tRNAs. The chain is Methylenetetrahydrofolate--tRNA-(uracil-5-)-methyltransferase TrmFO from Syntrophus aciditrophicus (strain SB).